Consider the following 54-residue polypeptide: Potassium channel toxin alpha-KTx 14.2 (54 aa).

Positions 1-23 (MKIFFAILLILAVCSMAIWTVNG) are cleaved as a signal peptide. 3 disulfide bridges follow: cysteine 30/cysteine 46, cysteine 36/cysteine 51, and cysteine 40/cysteine 53.

Belongs to the short scorpion toxin superfamily. Potassium channel inhibitor family. Alpha-KTx 14 subfamily. In terms of tissue distribution, expressed by the venom gland.

Its subcellular location is the secreted. Functionally, inhibits potassium channels. May be active towards small conductance calcium-activated potassium channels (KCNN, SK), and less active towards voltage-gated potassium channels (Kv/KCN). The sequence is that of Potassium channel toxin alpha-KTx 14.2 from Olivierus martensii (Manchurian scorpion).